The chain runs to 291 residues: Ribosomal RNA small subunit methyltransferase A (291 aa).

6 residues coordinate S-adenosyl-L-methionine: N27, L29, G54, E75, D100, and N125.

Belongs to the class I-like SAM-binding methyltransferase superfamily. rRNA adenine N(6)-methyltransferase family. RsmA subfamily.

The protein resides in the cytoplasm. The enzyme catalyses adenosine(1518)/adenosine(1519) in 16S rRNA + 4 S-adenosyl-L-methionine = N(6)-dimethyladenosine(1518)/N(6)-dimethyladenosine(1519) in 16S rRNA + 4 S-adenosyl-L-homocysteine + 4 H(+). In terms of biological role, specifically dimethylates two adjacent adenosines (A1518 and A1519) in the loop of a conserved hairpin near the 3'-end of 16S rRNA in the 30S particle. May play a critical role in biogenesis of 30S subunits. The sequence is that of Ribosomal RNA small subunit methyltransferase A from Streptococcus mutans serotype c (strain ATCC 700610 / UA159).